The chain runs to 137 residues: Fructose-bisphosphate aldolase C (137 aa).

The active-site Schiff-base intermediate with dihydroxyacetone-P is the K3.

This sequence belongs to the class I fructose-bisphosphate aldolase family. As to quaternary structure, homotetramer.

The enzyme catalyses beta-D-fructose 1,6-bisphosphate = D-glyceraldehyde 3-phosphate + dihydroxyacetone phosphate. The protein operates within carbohydrate degradation; glycolysis; D-glyceraldehyde 3-phosphate and glycerone phosphate from D-glucose: step 4/4. The protein is Fructose-bisphosphate aldolase C (ALDOC) of Gallus gallus (Chicken).